The following is a 691-amino-acid chain: Histone-lysine N-methyltransferase Set8 (691 aa).

Disordered stretches follow at residues 1-22 (MIMV…AAAA), 211-234 (RSGL…SATT), 345-381 (PAAG…GDGG), 422-450 (SRRR…QPTN), and 484-516 (APAK…ATNG). Residues 220–232 (SSHSSSSSGGASA) show a composition bias toward low complexity. The segment covering 431 to 446 (PQAPYQPQQPQPPPGT) has biased composition (pro residues). A compositionally biased stretch (low complexity) spans 484–503 (APAKPRAALTKGSKTKTGSK). Residues 555–676 (EGLQVRNFMG…PGEELTYDYG (122 aa)) form the SET domain. Residues 565-567 (KGR), tyrosine 610, and 637-638 (NH) contribute to the S-adenosyl-L-methionine site.

The protein belongs to the class V-like SAM-binding methyltransferase superfamily. Histone-lysine methyltransferase family. PR/SET subfamily.

It is found in the nucleus. It localises to the chromosome. The enzyme catalyses L-lysyl(20)-[histone H4] + S-adenosyl-L-methionine = N(6)-methyl-L-lysyl(20)-[histone H4] + S-adenosyl-L-homocysteine + H(+). Functionally, histone methyltransferase that specifically monomethylates 'Lys-20' of histone H4. H4 'Lys-20' monomethylation is enriched during mitosis and represents a specific tag for epigenetic transcriptional repression. Mainly functions in euchromatin regions, thereby playing a central role in the silencing of euchromatic genes. Required for cell proliferation, possibly by contributing to the maintenance of proper higher-order structure of DNA and chromosome condensation during mitosis. In Drosophila pseudoobscura pseudoobscura (Fruit fly), this protein is Histone-lysine N-methyltransferase Set8.